Here is a 346-residue protein sequence, read N- to C-terminus: Dihydroorotase (346 aa).

Zn(2+)-binding residues include histidine 13 and histidine 15. Residues 15 to 17 and asparagine 41 each bind substrate; that span reads HLR. 3 residues coordinate Zn(2+): lysine 99, histidine 136, and histidine 174. At lysine 99 the chain carries N6-carboxylysine. Histidine 136 lines the substrate pocket. Leucine 219 contributes to the substrate binding site. Position 247 (aspartate 247) interacts with Zn(2+). The active site involves aspartate 247. The substrate site is built by histidine 251 and alanine 263.

It belongs to the metallo-dependent hydrolases superfamily. DHOase family. Class II DHOase subfamily. Homodimer. It depends on Zn(2+) as a cofactor.

It catalyses the reaction (S)-dihydroorotate + H2O = N-carbamoyl-L-aspartate + H(+). It participates in pyrimidine metabolism; UMP biosynthesis via de novo pathway; (S)-dihydroorotate from bicarbonate: step 3/3. In terms of biological role, catalyzes the reversible cyclization of carbamoyl aspartate to dihydroorotate. In Picosynechococcus sp. (strain ATCC 27264 / PCC 7002 / PR-6) (Agmenellum quadruplicatum), this protein is Dihydroorotase.